The sequence spans 357 residues: DNA integrity scanning protein DisA (357 aa).

The region spanning 8-146 (VKSMINILQL…GNLRYTLKDI (139 aa)) is the DAC domain. ATP-binding positions include glycine 75, leucine 93, and 106 to 110 (MRHRT).

This sequence belongs to the DisA family. Homooctamer. Mg(2+) is required as a cofactor.

The catalysed reaction is 2 ATP = 3',3'-c-di-AMP + 2 diphosphate. Functionally, participates in a DNA-damage check-point that is active prior to asymmetric division when DNA is damaged. DisA forms globular foci that rapidly scan along the chromosomes during sporulation, searching for lesions. When a lesion is present, DisA pauses at the lesion site. This triggers a cellular response that culminates in a temporary block in sporulation initiation. Its function is as follows. Also has diadenylate cyclase activity, catalyzing the condensation of 2 ATP molecules into cyclic di-AMP (c-di-AMP). c-di-AMP acts as a signaling molecule that couples DNA integrity with progression of sporulation. The rise in c-di-AMP level generated by DisA while scanning the chromosome, operates as a positive signal that advances sporulation; upon encountering a lesion, the DisA focus arrests at the damaged site and halts c-di-AMP synthesis. This chain is DNA integrity scanning protein DisA, found in Bacillus cereus (strain G9842).